A 133-amino-acid chain; its full sequence is Thioredoxin-2, mitochondrial (133 aa).

A mitochondrion-targeting transit peptide spans 1-29 (MRGFIANSLKPHMRSFALRRSFTSSRILR). A Thioredoxin domain is found at 30–133 (KVNAVESFGD…LSSLLAKYQE (104 aa)). Catalysis depends on nucleophile residues C59 and C62. An intrachain disulfide couples C59 to C62.

Belongs to the thioredoxin family. As to quaternary structure, interacts with arg3.

Its subcellular location is the mitochondrion. Disulfide reductase which serves multiple functions in mitochondria, protecting mitochondrial components against thiol-oxidative damage as a thiol-disulfide oxidoreductase, and supporting urea cycle and respiration in mitochondria in a manner independent of active site thiols. The sequence is that of Thioredoxin-2, mitochondrial (trx2) from Schizosaccharomyces pombe (strain 972 / ATCC 24843) (Fission yeast).